The chain runs to 278 residues: Digeranylgeranylglyceryl phosphate synthase (278 aa).

8 consecutive transmembrane segments (helical) span residues 17–37 (MASF…LEMV), 40–60 (LIFA…LNDI), 91–111 (LLVF…LMAV), 129–149 (IIGN…GGIA), 153–173 (IDVT…REII), 204–224 (LLLV…FFGI), 226–246 (YLIS…PLLI), and 257–277 (SRNI…GSFF).

Belongs to the UbiA prenyltransferase family. DGGGP synthase subfamily. Requires Mg(2+) as cofactor.

It is found in the cell membrane. It carries out the reaction sn-3-O-(geranylgeranyl)glycerol 1-phosphate + (2E,6E,10E)-geranylgeranyl diphosphate = 2,3-bis-O-(geranylgeranyl)-sn-glycerol 1-phosphate + diphosphate. It functions in the pathway membrane lipid metabolism; glycerophospholipid metabolism. In terms of biological role, prenyltransferase that catalyzes the transfer of the geranylgeranyl moiety of geranylgeranyl diphosphate (GGPP) to the C2 hydroxyl of (S)-3-O-geranylgeranylglyceryl phosphate (GGGP). This reaction is the second ether-bond-formation step in the biosynthesis of archaeal membrane lipids. This is Digeranylgeranylglyceryl phosphate synthase from Methanococcus maripaludis (strain C5 / ATCC BAA-1333).